Here is a 628-residue protein sequence, read N- to C-terminus: tRNA uridine 5-carboxymethylaminomethyl modification enzyme MnmG (628 aa).

FAD is bound by residues 11–16, V123, and S178; that span reads GAGHAG. Residue 271–285 participates in NAD(+) binding; the sequence is GPRYCPSIETKIVTF. Q368 is a binding site for FAD.

It belongs to the MnmG family. In terms of assembly, homodimer. Heterotetramer of two MnmE and two MnmG subunits. It depends on FAD as a cofactor.

It localises to the cytoplasm. NAD-binding protein involved in the addition of a carboxymethylaminomethyl (cmnm) group at the wobble position (U34) of certain tRNAs, forming tRNA-cmnm(5)s(2)U34. The sequence is that of tRNA uridine 5-carboxymethylaminomethyl modification enzyme MnmG from Bacteroides thetaiotaomicron (strain ATCC 29148 / DSM 2079 / JCM 5827 / CCUG 10774 / NCTC 10582 / VPI-5482 / E50).